Consider the following 183-residue polypeptide: NADH-quinone oxidoreductase subunit A (183 aa).

3 helical membrane passes run 11-31 (IIAF…VPLL), 63-83 (FYLV…LYAW), and 98-118 (MVIF…TGAL). Residues 160-183 (GHIPAQSSGRMKSKTSTAPSSKQE) are disordered. The span at 164–183 (AQSSGRMKSKTSTAPSSKQE) shows a compositional bias: polar residues.

This sequence belongs to the complex I subunit 3 family. As to quaternary structure, NDH-1 is composed of 14 different subunits. Subunits NuoA, H, J, K, L, M, N constitute the membrane sector of the complex.

It localises to the cell inner membrane. It catalyses the reaction a quinone + NADH + 5 H(+)(in) = a quinol + NAD(+) + 4 H(+)(out). NDH-1 shuttles electrons from NADH, via FMN and iron-sulfur (Fe-S) centers, to quinones in the respiratory chain. The immediate electron acceptor for the enzyme in this species is believed to be ubiquinone. Couples the redox reaction to proton translocation (for every two electrons transferred, four hydrogen ions are translocated across the cytoplasmic membrane), and thus conserves the redox energy in a proton gradient. This Acinetobacter baylyi (strain ATCC 33305 / BD413 / ADP1) protein is NADH-quinone oxidoreductase subunit A.